We begin with the raw amino-acid sequence, 227 residues long: Phosphoribosylformylglycinamidine synthase subunit PurQ (227 aa).

A Glutamine amidotransferase type-1 domain is found at 3–227 (FAVIVFPGSN…NWRESHVTAS (225 aa)). Cysteine 86 serves as the catalytic Nucleophile. Residues histidine 194 and glutamate 196 contribute to the active site.

Part of the FGAM synthase complex composed of 1 PurL, 1 PurQ and 2 PurS subunits.

Its subcellular location is the cytoplasm. The catalysed reaction is N(2)-formyl-N(1)-(5-phospho-beta-D-ribosyl)glycinamide + L-glutamine + ATP + H2O = 2-formamido-N(1)-(5-O-phospho-beta-D-ribosyl)acetamidine + L-glutamate + ADP + phosphate + H(+). It catalyses the reaction L-glutamine + H2O = L-glutamate + NH4(+). The protein operates within purine metabolism; IMP biosynthesis via de novo pathway; 5-amino-1-(5-phospho-D-ribosyl)imidazole from N(2)-formyl-N(1)-(5-phospho-D-ribosyl)glycinamide: step 1/2. Its function is as follows. Part of the phosphoribosylformylglycinamidine synthase complex involved in the purines biosynthetic pathway. Catalyzes the ATP-dependent conversion of formylglycinamide ribonucleotide (FGAR) and glutamine to yield formylglycinamidine ribonucleotide (FGAM) and glutamate. The FGAM synthase complex is composed of three subunits. PurQ produces an ammonia molecule by converting glutamine to glutamate. PurL transfers the ammonia molecule to FGAR to form FGAM in an ATP-dependent manner. PurS interacts with PurQ and PurL and is thought to assist in the transfer of the ammonia molecule from PurQ to PurL. In Shouchella clausii (strain KSM-K16) (Alkalihalobacillus clausii), this protein is Phosphoribosylformylglycinamidine synthase subunit PurQ.